Consider the following 205-residue polypeptide: FAS-associated death domain protein (205 aa).

A DED domain is found at 3-81 (PFLVLLHSLS…RHDLLQRLDD (79 aa)). In terms of domain architecture, Death spans 97-181 (LQVAFDIVCD…LVADLVEEAQ (85 aa)). The disordered stretch occupies residues 181-205 (QESVSKSENMSPVLRDSTVSSSETP). A Phosphoserine modification is found at Ser191.

As to quaternary structure, can self-associate. Component of the AIM2 PANoptosome complex, a multiprotein complex that drives inflammatory cell death (PANoptosis). Component of the death-induced signaling complex (DISC) composed of cell surface receptor FAS/CD95 or TNFRSF1A, adapter protein FADD and the CASP8 protease; recruitment of CASP8 to the complex is required for processing of CASP8 into the p18 and p10 subunits. Interacts (via death domain) with FAS (via death domain). Interacts directly (via DED domain) with NOL3 (via CARD domain); inhibits death-inducing signaling complex (DISC) assembly by inhibiting the increase in FAS-FADD binding induced by FAS activation. Interacts with CFLAR, PEA15 and MBD4. When phosphorylated, part of a complex containing HIPK3 and FAS. May interact with MAVS/IPS1. Interacts with MOCV v-CFLAR protein and PIDD1. Interacts with RIPK1 and TRADD. Interacts with stimulated TNFRSF10B. Interacts with DDX24.

The protein localises to the cytoplasm. Apoptotic adapter molecule that recruits caspases CASP8 or CASP10 to the activated FAS/CD95 or TNFRSF1A/TNFR-1 receptors. The resulting aggregate called the death-inducing signaling complex (DISC) performs CASP8 proteolytic activation. Active CASP8 initiates the subsequent cascade of caspases mediating apoptosis. Involved in interferon-mediated antiviral immune response, playing a role in the positive regulation of interferon signaling. This is FAS-associated death domain protein from Mus musculus (Mouse).